Consider the following 139-residue polypeptide: MSKKTIYFLCTGNSCRSQMAEGWAKKHLGDEWNVYSAGIEAHGLNPNAVKAMREAGIDISEQTSDIIDPDILHNADLVITLCGDAADKCPMTPPHVKREHWGFDDPAKAEGTEEEKWAFFQRVRDEIGERIKRFAETGE.

Active-site nucleophile residues include Cys10, Cys82, and Cys89. Disulfide bonds link Cys10–Cys82 and Cys82–Cys89.

This sequence belongs to the low molecular weight phosphotyrosine protein phosphatase family. Thioredoxin-coupled ArsC subfamily.

It localises to the cytoplasm. The catalysed reaction is arsenate + [thioredoxin]-dithiol + H(+) = arsenite + [thioredoxin]-disulfide + H2O. Functionally, catalyzes the reduction of arsenate [As(V)] to arsenite [As(III)]. This is Arsenate reductase from Bacillus licheniformis (strain ATCC 14580 / DSM 13 / JCM 2505 / CCUG 7422 / NBRC 12200 / NCIMB 9375 / NCTC 10341 / NRRL NRS-1264 / Gibson 46).